The primary structure comprises 116 residues: Small ribosomal subunit protein uS8c (116 aa).

Belongs to the universal ribosomal protein uS8 family. In terms of assembly, part of the 30S ribosomal subunit.

The protein resides in the plastid. Its subcellular location is the chloroplast. In terms of biological role, one of the primary rRNA binding proteins, it binds directly to 16S rRNA central domain where it helps coordinate assembly of the platform of the 30S subunit. This chain is Small ribosomal subunit protein uS8c (rps8), found in Musa acuminata (Banana).